The primary structure comprises 482 residues: Glutamyl-tRNA(Gln) amidotransferase subunit A (482 aa).

Active-site charge relay system residues include Lys74 and Ser149. The active-site Acyl-ester intermediate is Ser173.

This sequence belongs to the amidase family. GatA subfamily. As to quaternary structure, heterotrimer of A, B and C subunits.

It carries out the reaction L-glutamyl-tRNA(Gln) + L-glutamine + ATP + H2O = L-glutaminyl-tRNA(Gln) + L-glutamate + ADP + phosphate + H(+). Functionally, allows the formation of correctly charged Gln-tRNA(Gln) through the transamidation of misacylated Glu-tRNA(Gln) in organisms which lack glutaminyl-tRNA synthetase. The reaction takes place in the presence of glutamine and ATP through an activated gamma-phospho-Glu-tRNA(Gln). This Prochlorococcus marinus (strain MIT 9215) protein is Glutamyl-tRNA(Gln) amidotransferase subunit A.